Here is a 391-residue protein sequence, read N- to C-terminus: MIPEQTNHVVSTIENLPAESISASPGPLHRMRNVFSREMLLSVALGQVLSLLICGIRLTSKYLSEDFHANTPLFQSFLNYILLFLVYTTTLAVRQGEENLLAILKRRWWKYMFLGIIDIEATYLVVKAHQYTTFISIQLLNCFVIPVVILLSWFFLLVRYKVLHFIGAIACILGIGCMAGADVLMGRQQKGDFYPGDSKLIGDVLVLGGATLYGISSVCQEYIVRNLSRVELLGMIGLFGSFFSGIQLAIMEHKELLKVPWDWQIGLLYVGFTACMFGLYSFMPVVIKKTSATAINLSMLTAELYTFFCGLFLFHYKFSGLYLLSFFTILLGLVFYFSTNTYVAQDPRVYKQFRNPSGPVVELPSSGQLEPSVTYTSLSQETEEEPRVRVA.

10 consecutive transmembrane segments (helical) span residues M39–T59, L73–V93, W108–A128, I137–L157, F165–M185, L200–Q220, V230–I250, L267–I287, A294–F314, and F318–S338. Residues V361–A391 are disordered. Over residues S365–Q380 the composition is skewed to polar residues.

The protein belongs to the SLC35F solute transporter family.

Its subcellular location is the membrane. Functionally, putative solute transporter. The chain is Solute carrier family 35 member F2 (slc35f2) from Xenopus tropicalis (Western clawed frog).